A 407-amino-acid polypeptide reads, in one-letter code: Ribonuclease Z (407 aa).

The interval 1-308 (MEITFLGTSS…QDFLHYAIPR (308 aa)) is ribonuclease Z. Zn(2+)-binding residues include His-62, His-64, Asp-66, His-67, His-139, Asp-210, and His-268. Catalysis depends on Asp-66, which acts as the Proton acceptor. Positions 309–407 (DGQICAEMPP…VDWSALNVLF (99 aa)) are unknown.

The protein belongs to the RNase Z family. As to quaternary structure, homodimer. Requires Zn(2+) as cofactor.

The catalysed reaction is Endonucleolytic cleavage of RNA, removing extra 3' nucleotides from tRNA precursor, generating 3' termini of tRNAs. A 3'-hydroxy group is left at the tRNA terminus and a 5'-phosphoryl group is left at the trailer molecule.. Functionally, zinc phosphodiesterase, which displays some tRNA 3'-processing endonuclease activity. Probably involved in tRNA maturation, by removing a 3'-trailer from precursor tRNA. In Thermosynechococcus vestitus (strain NIES-2133 / IAM M-273 / BP-1), this protein is Ribonuclease Z (rnz).